A 281-amino-acid polypeptide reads, in one-letter code: Nucleotide-binding protein PSHAa2554 (281 aa).

8–15 (GRSGSGKS) lines the ATP pocket. 56–59 (DVRN) contacts GTP.

The protein belongs to the RapZ-like family.

Functionally, displays ATPase and GTPase activities. The sequence is that of Nucleotide-binding protein PSHAa2554 from Pseudoalteromonas translucida (strain TAC 125).